The chain runs to 69 residues: Dermaseptin-H3 (69 aa).

The first 22 residues, 1 to 22, serve as a signal peptide directing secretion; sequence MAFLKKSLFLVLFLGMVSLSIC. A propeptide spanning residues 23-43 is cleaved from the precursor; that stretch reads EEEKRENEDEEKQEDDEQSEM. The segment at 24 to 44 is disordered; it reads EEKRENEDEEKQEDDEQSEMK. Acidic residues predominate over residues 30–40; the sequence is EDEEKQEDDEQ. Leucine 66 bears the Leucine amide mark. The propeptide occupies 68–69; that stretch reads EQ.

Belongs to the frog skin active peptide (FSAP) family. Dermaseptin subfamily. In terms of tissue distribution, expressed by the skin glands.

Its subcellular location is the secreted. Possesses a potent antimicrobial activity against Gram-positive and Gram-negative bacteria. Probably acts by disturbing membrane functions with its amphipathic structure. This chain is Dermaseptin-H3, found in Pithecopus azureus (Orange-legged monkey tree frog).